Consider the following 259-residue polypeptide: MENVYISSYSSNEQTSMAVTATDIRELLSQYVDDANLEDLIEWAMEKSSKYYIKNIGNTKSNIEETKFESKNNIGIEYSKDSRNKLSYRNKPSIATNLEYKTLCDMIKGTSGTEKEFLRYLLFGIKCIKKGVEYNIDKIKDVSYNDYFNVLDEKYNTPCPNCKSRNTTPMMIQTRAADEPPLVRHACRDCKQHFKPPKFRAFRNLNVTTQSIHENKEITEILPDNNPSPPESPEPASPIDDGLIRATFDRNDEPPEDDE.

Residues 155-195 (YNTPCPNCKSRNTTPMMIQTRAADEPPLVRHACRDCKQHFK) form a TFIIS-type zinc finger. Positions 159, 162, 187, and 190 each coordinate Zn(2+). The tract at residues 220–259 (EILPDNNPSPPESPEPASPIDDGLIRATFDRNDEPPEDDE) is disordered. Residues 226 to 236 (NPSPPESPEPA) are compositionally biased toward pro residues.

The protein belongs to the poxviridae DNA-directed RNA polymerase 30 kDa subunit family. In terms of assembly, the DNA-dependent RNA polymerase (vRNAP) consists of eight subunits encoded by early viral genes and termed according to their apparent molecular masses Rpo147, Rpo132, Rpo35, Rpo30, Rpo22, Rpo19, Rpo18, and Rpo7. The same holoenzyme, with the addition of the transcription-specificity factor RAP94, is used for early gene expression.

Its subcellular location is the virion. The protein resides in the host cytoplasm. The catalysed reaction is RNA(n) + a ribonucleoside 5'-triphosphate = RNA(n+1) + diphosphate. Functionally, part of the DNA-dependent RNA polymerase which catalyzes the transcription of viral DNA into RNA using the four ribonucleoside triphosphates as substrates. Responsible for the transcription of early, intermediate and late genes. DNA-dependent RNA polymerase associates with the early transcription factor (ETF), itself composed of OPG118 and OPG134, thereby allowing the early genes transcription. Late transcription, and probably also intermediate transcription, require newly synthesized RNA polymerase. This is DNA-directed RNA polymerase 30 kDa polypeptide (OPG066) from Bos taurus (Bovine).